The chain runs to 610 residues: Tyrosine-protein kinase Drl (610 aa).

An N-terminal signal peptide occupies residues 1 to 20 (MAPNLLTIGLLLTLIASGQA). Residues 21–242 (HLNIFLNLHE…RENLVPPASG (222 aa)) lie on the Extracellular side of the membrane. The region spanning 24 to 155 (IFLNLHEVLR…NLIFKRKKIC (132 aa)) is the WIF domain. Residues N63, N99, and N143 are each glycosylated (N-linked (GlcNAc...) asparagine). The tract at residues 202 to 230 (QAPEKQRPVVTESPVGRGNSGGSKRDFDP) is disordered. Residues 243–263 (LVTLIVGGILALVLVSTLILI) form a helical membrane-spanning segment. Residues 264–610 (AYCAKGPSKR…EFHTQITRYV (347 aa)) are Cytoplasmic-facing. Residues 343–606 (VRLSCLVQEG…ICLSEFHTQI (264 aa)) form the Protein kinase domain. ATP contacts are provided by residues 349–357 (VQEGNFGRI) and K371. The active-site Proton acceptor is D468. At Y498 the chain carries Phosphotyrosine; by autocatalysis.

It belongs to the protein kinase superfamily. Tyr protein kinase family. In terms of tissue distribution, in the embryonic abdominal hemisegment, expression is restricted to cell body, axon and growth cone of a cluster of 20 ventral nerve cord interneurons. During muscle growth and attachment events in the embryonic abdominal hemisegment, expression is in somatic muscle fibers 21-23 at 10-13 hours and 2 patches of approximately 15 neighboring epidermal cells (dorsal and ventral attachment sites) at 6-13 hours.

It is found in the cell membrane. It carries out the reaction L-tyrosyl-[protein] + ATP = O-phospho-L-tyrosyl-[protein] + ADP + H(+). Functionally, probable coreceptor of Wnt proteins. Involved in neuronal pathway recognition and ventral muscle attachment site selection. Non-vital for development. May be part of a signal transduction cascade involved in learning and possibly memory. The protein is Tyrosine-protein kinase Drl (drl) of Drosophila melanogaster (Fruit fly).